The sequence spans 508 residues: Phenylalanine--tRNA ligase alpha subunit (508 aa).

A2 is subject to N-acetylalanine. S193 and S301 each carry phosphoserine. Residue K311 is modified to N6-acetyllysine. L-phenylalanine is bound by residues T329, Q372–E374, and Y412. Residue E414 participates in Mg(2+) binding. F438 is an L-phenylalanine binding site.

It belongs to the class-II aminoacyl-tRNA synthetase family. Phe-tRNA synthetase alpha subunit type 2 subfamily. In terms of assembly, heterotetramer; dimer of two heterodimers formed by FARSA and FARSB. Mg(2+) is required as a cofactor.

It is found in the cytoplasm. It catalyses the reaction tRNA(Phe) + L-phenylalanine + ATP = L-phenylalanyl-tRNA(Phe) + AMP + diphosphate + H(+). This chain is Phenylalanine--tRNA ligase alpha subunit (Farsa), found in Mus musculus (Mouse).